We begin with the raw amino-acid sequence, 322 residues long: Probable 5-dehydro-4-deoxyglucarate dehydratase 2 (322 aa).

This sequence belongs to the DapA family.

The catalysed reaction is 5-dehydro-4-deoxy-D-glucarate + H(+) = 2,5-dioxopentanoate + CO2 + H2O. It functions in the pathway carbohydrate acid metabolism; D-glucarate degradation; 2,5-dioxopentanoate from D-glucarate: step 2/2. This Streptomyces coelicolor (strain ATCC BAA-471 / A3(2) / M145) protein is Probable 5-dehydro-4-deoxyglucarate dehydratase 2.